Here is a 619-residue protein sequence, read N- to C-terminus: Chaperone protein HscA homolog (619 aa).

The protein belongs to the heat shock protein 70 family.

Chaperone involved in the maturation of iron-sulfur cluster-containing proteins. Has a low intrinsic ATPase activity which is markedly stimulated by HscB. The polypeptide is Chaperone protein HscA homolog (Haemophilus influenzae (strain PittGG)).